Here is a 517-residue protein sequence, read N- to C-terminus: MSEQVALNPSEISELIRKKIDQFSVVSEARNEGTIVSLKDGIVRLHGLADVMAGEMIEFPGGVYGLALNLERDSVGAVILGDSSTLAEGQKGKCTGRILEVPVGKGLLGRVVDALGNPIDGKGPIESSGMSPIEKVAPGVITRKSVDQPVQTGLKAIDAMIPVGRGQRELIIGDRQTGKTAIAIDAIINQKGTGVKCVYVAVGQKASSVASIVRKLEEHGALEHTIVVVAGASDSAALQYIAPYSGCTMGEYFMERGEDALIVYDDLTKQAWAYRQISLLLRRPPGREAYPGDIFYLHSRLLERAARINADEVEKLTNGEVKGKTGSLTALPIIETQAGDVSAFVPTNVISITDGQIFLDVDLFNSGVRPAINSGLSVSRVGGAAQTKIMKKLGGGTRLALAQFRELEAFSQFASDLDDATRKQLERGQRITELMKQKQYSPLTVAEMGVSLFVVEKGYLDDVPVNEISSFEASLHDYMRSTHAALLHAINEAGAYDNEIEAKLKKAVEEFKNTGSW.

173 to 180 lines the ATP pocket; the sequence is GDRQTGKT.

This sequence belongs to the ATPase alpha/beta chains family. F-type ATPases have 2 components, CF(1) - the catalytic core - and CF(0) - the membrane proton channel. CF(1) has five subunits: alpha(3), beta(3), gamma(1), delta(1), epsilon(1). CF(0) has three main subunits: a(1), b(2) and c(9-12). The alpha and beta chains form an alternating ring which encloses part of the gamma chain. CF(1) is attached to CF(0) by a central stalk formed by the gamma and epsilon chains, while a peripheral stalk is formed by the delta and b chains.

The protein localises to the cell inner membrane. The catalysed reaction is ATP + H2O + 4 H(+)(in) = ADP + phosphate + 5 H(+)(out). Produces ATP from ADP in the presence of a proton gradient across the membrane. The alpha chain is a regulatory subunit. This Legionella pneumophila (strain Lens) protein is ATP synthase subunit alpha.